Consider the following 147-residue polypeptide: Transcriptional regulator MraZ (147 aa).

SpoVT-AbrB domains lie at 5 to 50 (AVAL…PLTA) and 79 to 122 (AQEE…SDAG).

The protein belongs to the MraZ family. As to quaternary structure, forms oligomers.

Its subcellular location is the cytoplasm. It is found in the nucleoid. This is Transcriptional regulator MraZ from Azoarcus sp. (strain BH72).